Here is a 155-residue protein sequence, read N- to C-terminus: Regulatory protein RecX (155 aa).

It belongs to the RecX family.

It is found in the cytoplasm. Its function is as follows. Modulates RecA activity. This Pseudomonas entomophila (strain L48) protein is Regulatory protein RecX.